The chain runs to 181 residues: ADP-ribosylation factor 3 (181 aa).

The N-myristoyl glycine moiety is linked to residue G2. Residues 24–31 (GLDAAGKT), 67–71 (DVGGQ), and 126–129 (NKQD) contribute to the GTP site.

It belongs to the small GTPase superfamily. Arf family. In terms of assembly, interacts with PRKCABP. Interacts with PI4KB and NCS1/FREQ at the Golgi complex.

Its subcellular location is the golgi apparatus. It is found in the cytoplasm. The protein resides in the perinuclear region. Functionally, GTP-binding protein that functions as an allosteric activator of the cholera toxin catalytic subunit, an ADP-ribosyltransferase. Involved in protein trafficking; may modulate vesicle budding and uncoating within the Golgi apparatus. The chain is ADP-ribosylation factor 3 (ARF3) from Bos taurus (Bovine).